Here is a 170-residue protein sequence, read N- to C-terminus: Bifunctional protein PyrR (170 aa).

A PRPP-binding motif is present at residues 90 to 102 (LVLIDDVLMSGRT).

Belongs to the purine/pyrimidine phosphoribosyltransferase family. PyrR subfamily.

The catalysed reaction is UMP + diphosphate = 5-phospho-alpha-D-ribose 1-diphosphate + uracil. Functionally, regulates the transcription of the pyrimidine nucleotide (pyr) operon in response to exogenous pyrimidines. Also displays a weak uracil phosphoribosyltransferase activity which is not physiologically significant. This is Bifunctional protein PyrR from Pseudomonas syringae pv. syringae (strain B728a).